The following is a 399-amino-acid chain: Lipoyl synthase, mitochondrial (399 aa).

A mitochondrion-targeting transit peptide spans 1–30; it reads MRAVLELTRRRARNARFARARAVVGARARA. A compositionally biased stretch (basic and acidic residues) spans 31-41; it reads ADAQELRDDSK. The disordered stretch occupies residues 31-58; that stretch reads ADAQELRDDSKGGSSVDKATSTAAEARE. Residues Cys-131, Cys-136, Cys-142, Cys-162, Cys-166, Cys-169, and Ser-375 each contribute to the [4Fe-4S] cluster site. The 220-residue stretch at 145-364 folds into the Radical SAM core domain; the sequence is GGDGKTATAT…QEIAEEMGFL (220 aa).

It belongs to the radical SAM superfamily. Lipoyl synthase family. [4Fe-4S] cluster serves as cofactor.

The protein localises to the mitochondrion. It carries out the reaction [[Fe-S] cluster scaffold protein carrying a second [4Fe-4S](2+) cluster] + N(6)-octanoyl-L-lysyl-[protein] + 2 oxidized [2Fe-2S]-[ferredoxin] + 2 S-adenosyl-L-methionine + 4 H(+) = [[Fe-S] cluster scaffold protein] + N(6)-[(R)-dihydrolipoyl]-L-lysyl-[protein] + 4 Fe(3+) + 2 hydrogen sulfide + 2 5'-deoxyadenosine + 2 L-methionine + 2 reduced [2Fe-2S]-[ferredoxin]. Its pathway is protein modification; protein lipoylation via endogenous pathway; protein N(6)-(lipoyl)lysine from octanoyl-[acyl-carrier-protein]: step 2/2. Functionally, catalyzes the radical-mediated insertion of two sulfur atoms into the C-6 and C-8 positions of the octanoyl moiety bound to the lipoyl domains of lipoate-dependent enzymes, thereby converting the octanoylated domains into lipoylated derivatives. The polypeptide is Lipoyl synthase, mitochondrial (Ostreococcus lucimarinus (strain CCE9901)).